Consider the following 282-residue polypeptide: Para-Rep C1 (282 aa).

In terms of domain architecture, CRESS-DNA virus Rep endonuclease spans 1–99 (MASKRWCFTL…ETLISEIGAP (99 aa)). The RCR-1 signature appears at 7-10 (CFTL). A divalent metal cation contacts are provided by E38 and H47. Residues 47–49 (HLQ) carry the RCR-2 motif. The Nuclear localization signal signature appears at 56-77 (KMIRLGGLKKKFGYRAHWEIAK). Y86 (for DNA cleavage activity) is an active-site residue. The RCR-3 motif lies at 86-89 (YCTK). S94 lines the a divalent metal cation pocket. 174-182 (GSDGGEGKS) is an ATP binding site.

This sequence belongs to the nanoviridea/circoviridae replication-associated protein family. As to quaternary structure, homooligomer (Potential). Rep binds to repeated DNA motifs (iterons). Requires Mg(2+) as cofactor. It depends on Mn(2+) as a cofactor.

The protein resides in the host nucleus. The catalysed reaction is ATP + H2O = ADP + phosphate + H(+). Initiates and terminates the replication only of its own subviral DNA molecule. The closed circular ssDNA genome is first converted to a superhelical dsDNA. Rep binds a specific hairpin at the genome origin of replication. Introduces an endonucleolytic nick within the intergenic region of the genome, thereby initiating the rolling circle replication (RCR). Following cleavage, binds covalently to the 5'-phosphate of DNA as a tyrosyl ester. The cleavage gives rise to a free 3'-OH that serves as a primer for the cellular DNA polymerase. The polymerase synthesizes the (+) strand DNA by rolling circle mechanism. After one round of replication, a Rep-catalyzed nucleotidyl transfer reaction releases a circular single-stranded virus genome, thereby terminating the replication. Displays origin-specific DNA cleavage, nucleotidyl transferase, ATPase and helicase activities. This Faba bean necrotic yellows C11 alphasatellite (FBNYC11A) protein is Para-Rep C1 (C1).